The sequence spans 84 residues: Cytochrome b559 subunit alpha (84 aa).

A helical membrane pass occupies residues 24 to 38; it reads IIHAVTLPAIFIAGF. Histidine 26 contributes to the heme binding site.

This sequence belongs to the PsbE/PsbF family. As to quaternary structure, heterodimer of an alpha subunit and a beta subunit. PSII is composed of 1 copy each of membrane proteins PsbA, PsbB, PsbC, PsbD, PsbE, PsbF, PsbH, PsbI, PsbJ, PsbK, PsbL, PsbM, PsbT, PsbX, PsbY, Psb30/Ycf12, peripheral proteins PsbO, CyanoQ (PsbQ), PsbU, PsbV and a large number of cofactors. It forms dimeric complexes. It depends on heme b as a cofactor.

The protein localises to the cellular thylakoid membrane. Its function is as follows. This b-type cytochrome is tightly associated with the reaction center of photosystem II (PSII). PSII is a light-driven water:plastoquinone oxidoreductase that uses light energy to abstract electrons from H(2)O, generating O(2) and a proton gradient subsequently used for ATP formation. It consists of a core antenna complex that captures photons, and an electron transfer chain that converts photonic excitation into a charge separation. The sequence is that of Cytochrome b559 subunit alpha from Prochlorococcus marinus subsp. pastoris (strain CCMP1986 / NIES-2087 / MED4).